The following is a 568-amino-acid chain: MGSLGMYSESGLTKKGSSRGYDVPEGVDIRGRYDEEFAKILNKEALLFIADLQRTFRNHIKYSMECRREAKRRYNEGGLPGFDPATKYIRDSEWTCAPVPPAVADRRVEITGPVERKMIINALNSGAKVFMADFEDALSPNWENLMRGQINLKDAVDGTISFHDRVRNRVYKLNDRTAKLFVRPRGWHLPEAHIFIDGEPATGCLVDFGLYFFHNHANFRRSQGQGYGPFFYLPKMEHSREAKIWNSVFERAEKMAGIERGSIRATVLIETLPAVFQMNEILYELRDHSVGLNCGRWDYIFSYVKTFQAHPDRLLPDRVLVGMTQHFMRSYSDLLIRTCHRRGVHAMGGMAAQIPIRDDPKANEVALELVRKDKLREVKAGHDGTWAAHPGLIPACMEVFTNNMGNAPNQIRSMRRDDAANLTEEDLLQQPRGVRTMEGLRLNTRVGIQYLAAWLTGAGSVPLYNLAEDAATAEISRVQNWQWLKYGVELDGDGLGVRVNKELFGRVVEEEMERIEREVGKERFKKGMYKEACKMFTRQCTAPNLDDFLTLDAYNYIVIHHPRELSKL.

The tract at residues 1 to 20 is disordered; it reads MGSLGMYSESGLTKKGSSRG. R183 functions as the Proton acceptor in the catalytic mechanism. D469 (proton donor) is an active-site residue. A Microbody targeting signal motif is present at residues 566–568; the sequence is SKL.

This sequence belongs to the malate synthase family.

It is found in the glyoxysome. The enzyme catalyses glyoxylate + acetyl-CoA + H2O = (S)-malate + CoA + H(+). It participates in carbohydrate metabolism; glyoxylate cycle; (S)-malate from isocitrate: step 2/2. This is Malate synthase, glyoxysomal from Cucumis sativus (Cucumber).